The sequence spans 193 residues: Cyanate hydratase (193 aa).

Catalysis depends on residues Arg121, Glu124, and Ser147.

The protein belongs to the cyanase family.

It catalyses the reaction cyanate + hydrogencarbonate + 3 H(+) = NH4(+) + 2 CO2. Functionally, catalyzes the reaction of cyanate with bicarbonate to produce ammonia and carbon dioxide. In Phaeodactylum tricornutum (strain CCAP 1055/1), this protein is Cyanate hydratase.